Reading from the N-terminus, the 366-residue chain is Glutamate 5-kinase (366 aa).

Residue Lys-17 participates in ATP binding. The substrate site is built by Ser-57, Asp-144, and Asn-156. ATP contacts are provided by residues 176–177 (SD) and 216–222 (TGGMASK). Positions 278–352 (QGILHIDEGA…GKSTQELPAE (75 aa)) constitute a PUA domain.

This sequence belongs to the glutamate 5-kinase family.

The protein localises to the cytoplasm. It carries out the reaction L-glutamate + ATP = L-glutamyl 5-phosphate + ADP. Its pathway is amino-acid biosynthesis; L-proline biosynthesis; L-glutamate 5-semialdehyde from L-glutamate: step 1/2. Functionally, catalyzes the transfer of a phosphate group to glutamate to form L-glutamate 5-phosphate. The sequence is that of Glutamate 5-kinase from Rhodococcus opacus (strain B4).